We begin with the raw amino-acid sequence, 183 residues long: Probable chemoreceptor glutamine deamidase CheD (183 aa).

Belongs to the CheD family.

The enzyme catalyses L-glutaminyl-[protein] + H2O = L-glutamyl-[protein] + NH4(+). Functionally, probably deamidates glutamine residues to glutamate on methyl-accepting chemotaxis receptors (MCPs), playing an important role in chemotaxis. This chain is Probable chemoreceptor glutamine deamidase CheD, found in Sinorhizobium medicae (strain WSM419) (Ensifer medicae).